A 504-amino-acid polypeptide reads, in one-letter code: D-alanine--D-alanyl carrier protein ligase (504 aa).

Residue 152-153 coordinates ATP; that stretch reads TS. Asp197 contacts D-alanine. 292–297 provides a ligand contact to ATP; sequence NTYGPT. Val301 serves as a coordination point for D-alanine. ATP contacts are provided by residues Asp383, 394 to 397, and Lys492; that span reads YNGR. Residue Lys492 participates in D-alanine binding.

This sequence belongs to the ATP-dependent AMP-binding enzyme family. DltA subfamily.

Its subcellular location is the cytoplasm. The catalysed reaction is holo-[D-alanyl-carrier protein] + D-alanine + ATP = D-alanyl-[D-alanyl-carrier protein] + AMP + diphosphate. It participates in cell wall biogenesis; lipoteichoic acid biosynthesis. Catalyzes the first step in the D-alanylation of lipoteichoic acid (LTA), the activation of D-alanine and its transfer onto the D-alanyl carrier protein (Dcp) DltC. In an ATP-dependent two-step reaction, forms a high energy D-alanyl-AMP intermediate, followed by transfer of the D-alanyl residue as a thiol ester to the phosphopantheinyl prosthetic group of the Dcp. D-alanylation of LTA plays an important role in modulating the properties of the cell wall in Gram-positive bacteria, influencing the net charge of the cell wall. In Bacillus cereus (strain B4264), this protein is D-alanine--D-alanyl carrier protein ligase.